Here is a 150-residue protein sequence, read N- to C-terminus: Large ribosomal subunit protein bL9 (150 aa).

This sequence belongs to the bacterial ribosomal protein bL9 family.

Binds to the 23S rRNA. This is Large ribosomal subunit protein bL9 from Vesicomyosocius okutanii subsp. Calyptogena okutanii (strain HA).